The sequence spans 547 residues: Phosphomethylpyrimidine synthase (547 aa).

Residues asparagine 150, methionine 179, tyrosine 208, histidine 244, 264–266 (SRG), 305–308 (DGLR), and glutamate 344 contribute to the substrate site. Histidine 348 serves as a coordination point for Zn(2+). Tyrosine 371 contributes to the substrate binding site. Histidine 412 serves as a coordination point for Zn(2+). [4Fe-4S] cluster-binding residues include cysteine 492, cysteine 495, and cysteine 500.

This sequence belongs to the ThiC family. The cofactor is [4Fe-4S] cluster.

It carries out the reaction 5-amino-1-(5-phospho-beta-D-ribosyl)imidazole + S-adenosyl-L-methionine = 4-amino-2-methyl-5-(phosphooxymethyl)pyrimidine + CO + 5'-deoxyadenosine + formate + L-methionine + 3 H(+). Its pathway is cofactor biosynthesis; thiamine diphosphate biosynthesis. Its function is as follows. Catalyzes the synthesis of the hydroxymethylpyrimidine phosphate (HMP-P) moiety of thiamine from aminoimidazole ribotide (AIR) in a radical S-adenosyl-L-methionine (SAM)-dependent reaction. The sequence is that of Phosphomethylpyrimidine synthase from Nocardia farcinica (strain IFM 10152).